The following is a 280-amino-acid chain: uncharacterized protein (280 aa).

2 disordered regions span residues 1-83 (MELK…EEEQ) and 248-280 (IRHR…EARL). The span at 12-25 (SAKTDNHTVYQNSP) shows a compositional bias: polar residues. Composition is skewed to basic and acidic residues over residues 41–71 (KQTR…RVDD) and 249–280 (RHRE…EARL).

It belongs to the chlamydial CPn_0705/CT_671/TC_0042 family.

This is an uncharacterized protein from Chlamydia pneumoniae (Chlamydophila pneumoniae).